Consider the following 265-residue polypeptide: Putative carbamate hydrolase RutD (265 aa).

The AB hydrolase-1 domain maps to 21–123 (PILLSAGMGG…TIVNGWARAD (103 aa)).

It belongs to the AB hydrolase superfamily. Hydrolase RutD family.

The enzyme catalyses carbamate + 2 H(+) = NH4(+) + CO2. Involved in pyrimidine catabolism. May facilitate the hydrolysis of carbamate, a reaction that can also occur spontaneously. The protein is Putative carbamate hydrolase RutD of Azorhizobium caulinodans (strain ATCC 43989 / DSM 5975 / JCM 20966 / LMG 6465 / NBRC 14845 / NCIMB 13405 / ORS 571).